We begin with the raw amino-acid sequence, 195 residues long: Translation machinery-associated protein 22 (195 aa).

An SUI1 domain is found at 94–165 (VLIKRIERNR…EAKEYIEKLL (72 aa)). The segment at 176-195 (EQVDEKKKKKATAPGATPAA) is disordered.

The protein belongs to the DENR family. As to quaternary structure, interacts with the 40S ribosomal subunit.

The protein resides in the cytoplasm. The sequence is that of Translation machinery-associated protein 22 (TMA22) from Scheffersomyces stipitis (strain ATCC 58785 / CBS 6054 / NBRC 10063 / NRRL Y-11545) (Yeast).